Here is a 65-residue protein sequence, read N- to C-terminus: Large ribosomal subunit protein bL35 (65 aa).

Belongs to the bacterial ribosomal protein bL35 family.

The polypeptide is Large ribosomal subunit protein bL35 (Borrelia turicatae (strain 91E135)).